The primary structure comprises 623 residues: Glutathione import ATP-binding protein GsiA (623 aa).

ABC transporter domains follow at residues 15-269 (VSGL…QTLL) and 325-564 (LRSG…RKLM). Residues 49 to 56 (GESGSGKS) and 357 to 364 (GESGSGKS) each bind ATP.

This sequence belongs to the ABC transporter superfamily. Glutathione importer (TC 3.A.1.5.11) family. As to quaternary structure, the complex is composed of two ATP-binding proteins (GsiA), two transmembrane proteins (GsiC and GsiD) and a solute-binding protein (GsiB).

It is found in the cell inner membrane. The enzyme catalyses glutathione(out) + ATP + H2O = glutathione(in) + ADP + phosphate + H(+). Functionally, part of the ABC transporter complex GsiABCD involved in glutathione import. Responsible for energy coupling to the transport system. This is Glutathione import ATP-binding protein GsiA from Salmonella typhi.